The following is a 515-amino-acid chain: Maturase K (515 aa).

The protein belongs to the intron maturase 2 family. MatK subfamily.

It is found in the plastid. It localises to the chloroplast. Its function is as follows. Usually encoded in the trnK tRNA gene intron. Probably assists in splicing its own and other chloroplast group II introns. The chain is Maturase K from Alpinia zerumbet (Shell ginger).